The following is a 194-amino-acid chain: ATP synthase subunit delta (194 aa).

This sequence belongs to the ATPase delta chain family. As to quaternary structure, F-type ATPases have 2 components, F(1) - the catalytic core - and F(0) - the membrane proton channel. F(1) has five subunits: alpha(3), beta(3), gamma(1), delta(1), epsilon(1). F(0) has three main subunits: a(1), b(2) and c(10-14). The alpha and beta chains form an alternating ring which encloses part of the gamma chain. F(1) is attached to F(0) by a central stalk formed by the gamma and epsilon chains, while a peripheral stalk is formed by the delta and b chains.

Its subcellular location is the cell inner membrane. In terms of biological role, f(1)F(0) ATP synthase produces ATP from ADP in the presence of a proton or sodium gradient. F-type ATPases consist of two structural domains, F(1) containing the extramembraneous catalytic core and F(0) containing the membrane proton channel, linked together by a central stalk and a peripheral stalk. During catalysis, ATP synthesis in the catalytic domain of F(1) is coupled via a rotary mechanism of the central stalk subunits to proton translocation. This protein is part of the stalk that links CF(0) to CF(1). It either transmits conformational changes from CF(0) to CF(1) or is implicated in proton conduction. The chain is ATP synthase subunit delta from Bartonella quintana (strain Toulouse) (Rochalimaea quintana).